Here is a 387-residue protein sequence, read N- to C-terminus: 8-amino-7-oxononanoate synthase (387 aa).

R19 provides a ligand contact to substrate. Residue 106–107 participates in pyridoxal 5'-phosphate binding; it reads GY. H131 contacts substrate. 3 residues coordinate pyridoxal 5'-phosphate: S177, H205, and T236. Position 239 is an N6-(pyridoxal phosphate)lysine (K239). T353 provides a ligand contact to substrate.

It belongs to the class-II pyridoxal-phosphate-dependent aminotransferase family. BioF subfamily. As to quaternary structure, homodimer. The cofactor is pyridoxal 5'-phosphate.

The enzyme catalyses 6-carboxyhexanoyl-[ACP] + L-alanine + H(+) = (8S)-8-amino-7-oxononanoate + holo-[ACP] + CO2. The protein operates within cofactor biosynthesis; biotin biosynthesis. Catalyzes the decarboxylative condensation of pimeloyl-[acyl-carrier protein] and L-alanine to produce 8-amino-7-oxononanoate (AON), [acyl-carrier protein], and carbon dioxide. This is 8-amino-7-oxononanoate synthase from Nitrosomonas eutropha (strain DSM 101675 / C91 / Nm57).